Reading from the N-terminus, the 232-residue chain is UPF0758 protein Clos_1766 (232 aa).

An MPN domain is found at 110 to 232 (KIKGPDDVSN…YFSMKEHKLI (123 aa)). Residues His181, His183, and Asp194 each contribute to the Zn(2+) site. The JAMM motif signature appears at 181–194 (HNHPSGDPNPSGED).

The protein belongs to the UPF0758 family.

The polypeptide is UPF0758 protein Clos_1766 (Alkaliphilus oremlandii (strain OhILAs) (Clostridium oremlandii (strain OhILAs))).